Consider the following 633-residue polypeptide: NADPH-dependent diflavin oxidoreductase 1 (633 aa).

Residues 5 to 149 (CTIIYATESG…EVEKWSQELI (145 aa)) enclose the Flavodoxin-like domain. FMN contacts are provided by residues 11 to 16 (TESGTS), 58 to 61 (STTG), and D131. One can recognise an FAD-binding FR-type domain in the interval 196–442 (TQFYKSKLKV…FIKESGARLP (247 aa)). Residues 377-380 (RPFS) and 412-415 (GLCS) each bind FAD. NADP(+) contacts are provided by residues T456, 520–521 (SR), 528–532 (KVYVQ), and D565. The disordered stretch occupies residues 580–610 (KNNNNNNNNNNNNNNNNNNNNNNNNNDDENN). Low complexity predominate over residues 581–604 (NNNNNNNNNNNNNNNNNNNNNNNN). Position 633 (W633) interacts with FAD.

Belongs to the NADPH-dependent diflavin oxidoreductase NDOR1 family. It in the N-terminal section; belongs to the flavodoxin family. This sequence in the C-terminal section; belongs to the flavoprotein pyridine nucleotide cytochrome reductase family. FAD is required as a cofactor. It depends on FMN as a cofactor.

It localises to the cytoplasm. The enzyme catalyses 2 oxidized [2Fe-2S]-[protein] + NADPH = 2 reduced [2Fe-2S]-[protein] + NADP(+) + H(+). Its function is as follows. NADPH-dependent reductase which is a central component of the cytosolic iron-sulfur (Fe-S) protein assembly (CIA) machinery. Transfers electrons from NADPH via its FAD and FMN prosthetic groups to the [2Fe-2S] cluster of the anamorsin/DRE2 homolog, another key component of the CIA machinery. In turn, this reduced cluster provides electrons for assembly of cytosolic iron-sulfur cluster proteins. The sequence is that of NADPH-dependent diflavin oxidoreductase 1 (redC) from Dictyostelium discoideum (Social amoeba).